A 337-amino-acid polypeptide reads, in one-letter code: tRNA N6-adenosine threonylcarbamoyltransferase (337 aa).

Fe cation-binding residues include His-111 and His-115. Substrate-binding positions include 134-138, Asp-167, Gly-180, and Asn-272; that span reads LVSGG. Asp-300 is a binding site for Fe cation.

Belongs to the KAE1 / TsaD family. Fe(2+) serves as cofactor.

The protein resides in the cytoplasm. It catalyses the reaction L-threonylcarbamoyladenylate + adenosine(37) in tRNA = N(6)-L-threonylcarbamoyladenosine(37) in tRNA + AMP + H(+). Functionally, required for the formation of a threonylcarbamoyl group on adenosine at position 37 (t(6)A37) in tRNAs that read codons beginning with adenine. Is involved in the transfer of the threonylcarbamoyl moiety of threonylcarbamoyl-AMP (TC-AMP) to the N6 group of A37, together with TsaE and TsaB. TsaD likely plays a direct catalytic role in this reaction. This chain is tRNA N6-adenosine threonylcarbamoyltransferase, found in Pseudoalteromonas translucida (strain TAC 125).